The sequence spans 191 residues: dCTP deaminase, dUMP-forming (191 aa).

DCTP is bound by residues 101 to 106, D119, 127 to 129, Q148, Y162, and Q174; these read KSSLGR and TLE. E129 functions as the Proton donor/acceptor in the catalytic mechanism.

Belongs to the dCTP deaminase family. As to quaternary structure, homotrimer.

The enzyme catalyses dCTP + 2 H2O = dUMP + NH4(+) + diphosphate. It functions in the pathway pyrimidine metabolism; dUMP biosynthesis; dUMP from dCTP: step 1/1. Its function is as follows. Bifunctional enzyme that catalyzes both the deamination of dCTP to dUTP and the hydrolysis of dUTP to dUMP without releasing the toxic dUTP intermediate. The sequence is that of dCTP deaminase, dUMP-forming from Streptomyces coelicolor (strain ATCC BAA-471 / A3(2) / M145).